The sequence spans 306 residues: UDP-N-acetylenolpyruvoylglucosamine reductase (306 aa).

The FAD-binding PCMH-type domain maps to 30–216 (RIGGPVPYIL…KSKLIDFSTR (187 aa)). Arg-180 is a catalytic residue. Catalysis depends on Ser-230, which acts as the Proton donor. Residue Glu-301 is part of the active site.

The protein belongs to the MurB family. FAD is required as a cofactor.

The protein resides in the cytoplasm. It carries out the reaction UDP-N-acetyl-alpha-D-muramate + NADP(+) = UDP-N-acetyl-3-O-(1-carboxyvinyl)-alpha-D-glucosamine + NADPH + H(+). It functions in the pathway cell wall biogenesis; peptidoglycan biosynthesis. Its function is as follows. Cell wall formation. In Petrotoga mobilis (strain DSM 10674 / SJ95), this protein is UDP-N-acetylenolpyruvoylglucosamine reductase.